The chain runs to 334 residues: Ribosomal RNA small subunit methyltransferase H (334 aa).

S-adenosyl-L-methionine is bound by residues 53 to 55, Asp72, Phe99, Asp122, and His129; that span reads GGH.

The protein belongs to the methyltransferase superfamily. RsmH family.

It is found in the cytoplasm. It carries out the reaction cytidine(1402) in 16S rRNA + S-adenosyl-L-methionine = N(4)-methylcytidine(1402) in 16S rRNA + S-adenosyl-L-homocysteine + H(+). Its function is as follows. Specifically methylates the N4 position of cytidine in position 1402 (C1402) of 16S rRNA. The polypeptide is Ribosomal RNA small subunit methyltransferase H (Leptospira interrogans serogroup Icterohaemorrhagiae serovar copenhageni (strain Fiocruz L1-130)).